Consider the following 127-residue polypeptide: Holo-[acyl-carrier-protein] synthase (127 aa).

The Mg(2+) site is built by D8 and E57.

It belongs to the P-Pant transferase superfamily. AcpS family. Mg(2+) is required as a cofactor.

Its subcellular location is the cytoplasm. The enzyme catalyses apo-[ACP] + CoA = holo-[ACP] + adenosine 3',5'-bisphosphate + H(+). Functionally, transfers the 4'-phosphopantetheine moiety from coenzyme A to a Ser of acyl-carrier-protein. This is Holo-[acyl-carrier-protein] synthase from Vesicomyosocius okutanii subsp. Calyptogena okutanii (strain HA).